The sequence spans 359 residues: Photosystem II protein D1 1 (359 aa).

The next 3 helical transmembrane spans lie at 29–46, 118–133, and 142–156; these read YVGW…AATT, HFLI…EWEL, and WICV…AASA. A chlorophyll a-binding site is contributed by His118. Residue Tyr126 participates in pheophytin a binding. Positions 170 and 189 each coordinate [CaMn4O5] cluster. Residues 197-218 traverse the membrane as a helical segment; that stretch reads FHMMGVAGVFGGSLFSAMHGSL. His198 contacts chlorophyll a. Residues His215 and 264-265 contribute to the a quinone site; that span reads SF. His215 contacts Fe cation. His272 contributes to the Fe cation binding site. The chain crosses the membrane as a helical span at residues 274–288; it reads FLAAWPVVGIWFTAL. [CaMn4O5] cluster contacts are provided by His332, Glu333, Asp342, and Ala344. Positions 345 to 359 are excised as a propeptide; that stretch reads AAESTPVALQAPAIG.

This sequence belongs to the reaction center PufL/M/PsbA/D family. PSII is composed of 1 copy each of membrane proteins PsbA, PsbB, PsbC, PsbD, PsbE, PsbF, PsbH, PsbI, PsbJ, PsbK, PsbL, PsbM, PsbT, PsbX, PsbY, PsbZ, Psb30/Ycf12, peripheral proteins PsbO, CyanoQ (PsbQ), PsbU, PsbV and a large number of cofactors. It forms dimeric complexes. The D1/D2 heterodimer binds P680, chlorophylls that are the primary electron donor of PSII, and subsequent electron acceptors. It shares a non-heme iron and each subunit binds pheophytin, quinone, additional chlorophylls, carotenoids and lipids. D1 provides most of the ligands for the Mn4-Ca-O5 cluster of the oxygen-evolving complex (OEC). There is also a Cl(-1) ion associated with D1 and D2, which is required for oxygen evolution. The PSII complex binds additional chlorophylls, carotenoids and specific lipids. serves as cofactor. Tyr-161 forms a radical intermediate that is referred to as redox-active TyrZ, YZ or Y-Z. Post-translationally, C-terminally processed by CtpA; processing is essential to allow assembly of the oxygen-evolving complex and thus photosynthetic growth.

The protein localises to the cellular thylakoid membrane. It carries out the reaction 2 a plastoquinone + 4 hnu + 2 H2O = 2 a plastoquinol + O2. In terms of biological role, photosystem II (PSII) is a light-driven water:plastoquinone oxidoreductase that uses light energy to abstract electrons from H(2)O, generating O(2) and a proton gradient subsequently used for ATP formation. It consists of a core antenna complex that captures photons, and an electron transfer chain that converts photonic excitation into a charge separation. The D1/D2 (PsbA/PsbD) reaction center heterodimer binds P680, the primary electron donor of PSII as well as several subsequent electron acceptors. The sequence is that of Photosystem II protein D1 1 from Synechococcus sp. (strain WH7803).